The following is a 149-amino-acid chain: Ribosomal RNA large subunit methyltransferase H (149 aa).

S-adenosyl-L-methionine contacts are provided by residues Leu71, Gly98, and Leu117–Leu122.

Belongs to the RNA methyltransferase RlmH family. Homodimer.

Its subcellular location is the cytoplasm. The catalysed reaction is pseudouridine(1915) in 23S rRNA + S-adenosyl-L-methionine = N(3)-methylpseudouridine(1915) in 23S rRNA + S-adenosyl-L-homocysteine + H(+). In terms of biological role, specifically methylates the pseudouridine at position 1915 (m3Psi1915) in 23S rRNA. The polypeptide is Ribosomal RNA large subunit methyltransferase H (Campylobacter fetus subsp. fetus (strain 82-40)).